A 229-amino-acid polypeptide reads, in one-letter code: UPF0173 metal-dependent hydrolase SSP1060 (229 aa).

The protein belongs to the UPF0173 family.

The polypeptide is UPF0173 metal-dependent hydrolase SSP1060 (Staphylococcus saprophyticus subsp. saprophyticus (strain ATCC 15305 / DSM 20229 / NCIMB 8711 / NCTC 7292 / S-41)).